Consider the following 146-residue polypeptide: Hemoglobin subunit beta (146 aa).

In terms of domain architecture, Globin spans His-2–His-146. His-63 and His-92 together coordinate heme b.

It belongs to the globin family. As to quaternary structure, heterotetramer of two alpha chains and two beta chains. In terms of tissue distribution, red blood cells.

Its function is as follows. Involved in oxygen transport from the lung to the various peripheral tissues. The polypeptide is Hemoglobin subunit beta (HBB) (Aegypius monachus (Cinereous vulture)).